We begin with the raw amino-acid sequence, 392 residues long: 8-amino-7-oxononanoate synthase (392 aa).

Position 19 (Arg-19) interacts with substrate. Pyridoxal 5'-phosphate is bound at residue Gly-106–Tyr-107. Position 131 (His-131) interacts with substrate. The pyridoxal 5'-phosphate site is built by Ser-176, His-204, and Thr-233. Lys-236 bears the N6-(pyridoxal phosphate)lysine mark. Residue Thr-350 participates in substrate binding.

This sequence belongs to the class-II pyridoxal-phosphate-dependent aminotransferase family. BioF subfamily. As to quaternary structure, homodimer. It depends on pyridoxal 5'-phosphate as a cofactor.

The enzyme catalyses 6-carboxyhexanoyl-[ACP] + L-alanine + H(+) = (8S)-8-amino-7-oxononanoate + holo-[ACP] + CO2. Its pathway is cofactor biosynthesis; biotin biosynthesis. Its function is as follows. Catalyzes the decarboxylative condensation of pimeloyl-[acyl-carrier protein] and L-alanine to produce 8-amino-7-oxononanoate (AON), [acyl-carrier protein], and carbon dioxide. The sequence is that of 8-amino-7-oxononanoate synthase from Stutzerimonas stutzeri (strain A1501) (Pseudomonas stutzeri).